A 115-amino-acid chain; its full sequence is Large ribosomal subunit protein P2 (115 aa).

M1 is modified (N-acetylmethionine). Residue S19 is modified to Phosphoserine. K21 is subject to N6-acetyllysine; alternate. K21 is modified (N6-succinyllysine; alternate). Positions 76–90 are enriched in low complexity; that stretch reads APGSAAPAAGSAPAA. Residues 76–115 are disordered; sequence APGSAAPAAGSAPAAAEEKKDEKKEESEESDDDMGFGLFD. Phosphoserine is present on residues S79 and S86. Residues 91 to 101 show a composition bias toward basic and acidic residues; that stretch reads AEEKKDEKKEE. A phosphoserine mark is found at S102 and S105.

Belongs to the eukaryotic ribosomal protein P1/P2 family. As to quaternary structure, heterodimer with RPLP1 at the lateral ribosomal stalk of the large ribosomal subunit.

Plays an important role in the elongation step of protein synthesis. In Rattus norvegicus (Rat), this protein is Large ribosomal subunit protein P2 (Rplp2).